Consider the following 386-residue polypeptide: D-galactosamine-6-phosphate deaminase AgaS (386 aa).

SIS domains follow at residues 59–217 (LTPI…CIEM) and 222–366 (LTER…PDNP).

Belongs to the SIS family. AgaS subfamily.

It is found in the cytoplasm. It carries out the reaction D-galactosamine 6-phosphate + H2O = D-tagatopyranose 1-phosphate + NH4(+). The enzyme catalyses alpha-D-glucosamine 6-phosphate + H2O = beta-D-fructose 6-phosphate + NH4(+). Functionally, involved in the pathway of N-acetyl-D-galactosamine degradation. Catalyzes the conversion of D-galactosamine 6-phosphate (GalN-6-P) to D-tagatofuranose 6-phosphate (Tag-6-P). It can also catalyze the conversion of D-glucosamine 6-phosphate. In Shewanella sp. (strain ANA-3), this protein is D-galactosamine-6-phosphate deaminase AgaS.